The primary structure comprises 430 residues: Mitochondrial distribution and morphology protein 10 (430 aa).

Polar residues predominate over residues 215 to 234 (SSSAMNPPSGTSASETNGSG). 2 disordered regions span residues 215 to 237 (SSSA…GPSV) and 339 to 393 (LGAN…GPKE).

Belongs to the MDM10 family. As to quaternary structure, component of the ER-mitochondria encounter structure (ERMES) or MDM complex, composed of MMM1, MDM10, MDM12 and MDM34. Associates with the mitochondrial outer membrane sorting assembly machinery SAM(core) complex.

It is found in the mitochondrion outer membrane. Component of the ERMES/MDM complex, which serves as a molecular tether to connect the endoplasmic reticulum and mitochondria. Components of this complex are involved in the control of mitochondrial shape and protein biogenesis and may function in phospholipid exchange. MDM10 is involved in the late assembly steps of the general translocase of the mitochondrial outer membrane (TOM complex). Functions in the TOM40-specific route of the assembly of outer membrane beta-barrel proteins, including the association of TOM40 with the receptor TOM22 and small TOM proteins. Can associate with the SAM(core) complex as well as the MDM12-MMM1 complex, both involved in late steps of the major beta-barrel assembly pathway, that is responsible for biogenesis of all outer membrane beta-barrel proteins. May act as a switch that shuttles between both complexes and channels precursor proteins into the TOM40-specific pathway. Plays a role in mitochondrial morphology and in the inheritance of mitochondria. This chain is Mitochondrial distribution and morphology protein 10, found in Chaetomium globosum (strain ATCC 6205 / CBS 148.51 / DSM 1962 / NBRC 6347 / NRRL 1970) (Soil fungus).